The sequence spans 296 residues: POM121-like protein 12 (296 aa).

Disordered regions lie at residues 1 to 54 (MGAA…SPWP) and 142 to 162 (APPE…RPAG). Over residues 34 to 52 (SRSPSTPQTTPSPQGRQSP) the composition is skewed to low complexity.

This sequence belongs to the POM121 family.

This chain is POM121-like protein 12 (POM121L12), found in Homo sapiens (Human).